The sequence spans 91 residues: Small ribosomal subunit protein bS20 (91 aa).

The interval 1-25 (MANSPSAKKRAKQAEKRRSHNASLR) is disordered. Over residues 7–20 (AKKRAKQAEKRRSH) the composition is skewed to basic residues.

Belongs to the bacterial ribosomal protein bS20 family.

Functionally, binds directly to 16S ribosomal RNA. This Azotobacter vinelandii (strain DJ / ATCC BAA-1303) protein is Small ribosomal subunit protein bS20.